Here is a 41-residue protein sequence, read N- to C-terminus: TSYGNGVHCNKSKCWIDVSELETYKAGTVSNPKDILWSLKE.

A disulfide bond links Cys9 and Cys14.

It is found in the secreted. Functionally, bacteriocin active against S.aureus, S.typhi, B.thuringiensis, Klebsiella sp., E.coli KL16 and E.coli Gj137. This Lactococcus sp protein is Bacteriocin.